Consider the following 226-residue polypeptide: MGQKVNPHGLRIGIIKDWDTKWYANDKNFSEYLVEDFKIRKFIKNKLYSAGISRIEIERAANKVKINVHAAKPGLIIGKGGAGIEELRKQLEKMTQKNILINITEIKVPELDAQIVAENIASQLEKRISFRRAMKQAMARAMRLGAKGIKTAVSGRIAGAEIARTEHYHEGTIPLQTLRADIDYGFAEANTTYGKLGVKVWIYKGEVLPAVKKDKGRKEEISNVNA.

Residues 39 to 107 (IRKFIKNKLY…NILINITEIK (69 aa)) form the KH type-2 domain.

The protein belongs to the universal ribosomal protein uS3 family. In terms of assembly, part of the 30S ribosomal subunit. Forms a tight complex with proteins S10 and S14.

Functionally, binds the lower part of the 30S subunit head. Binds mRNA in the 70S ribosome, positioning it for translation. This chain is Small ribosomal subunit protein uS3, found in Acetivibrio thermocellus (strain ATCC 27405 / DSM 1237 / JCM 9322 / NBRC 103400 / NCIMB 10682 / NRRL B-4536 / VPI 7372) (Clostridium thermocellum).